Consider the following 120-residue polypeptide: Large ribosomal subunit protein uL18 (120 aa).

The protein belongs to the universal ribosomal protein uL18 family. In terms of assembly, part of the 50S ribosomal subunit; part of the 5S rRNA/L5/L18/L25 subcomplex. Contacts the 5S and 23S rRNAs.

Functionally, this is one of the proteins that bind and probably mediate the attachment of the 5S RNA into the large ribosomal subunit, where it forms part of the central protuberance. The polypeptide is Large ribosomal subunit protein uL18 (Oleidesulfovibrio alaskensis (strain ATCC BAA-1058 / DSM 17464 / G20) (Desulfovibrio alaskensis)).